The sequence spans 439 residues: Glutamate--tRNA ligase 2 (439 aa).

The short motif at 6-16 is the 'HIGH' region element; it reads PSPTGDMHIGN. The 'KMSKS' region signature appears at 232-236; sequence KMSKR. Residue Lys-235 participates in ATP binding.

The protein belongs to the class-I aminoacyl-tRNA synthetase family. Glutamate--tRNA ligase type 1 subfamily. In terms of assembly, monomer.

Its subcellular location is the cytoplasm. It carries out the reaction tRNA(Glu) + L-glutamate + ATP = L-glutamyl-tRNA(Glu) + AMP + diphosphate. Functionally, catalyzes the attachment of glutamate to tRNA(Glu) in a two-step reaction: glutamate is first activated by ATP to form Glu-AMP and then transferred to the acceptor end of tRNA(Glu). The sequence is that of Glutamate--tRNA ligase 2 from Helicobacter pylori (strain HPAG1).